Here is a 281-residue protein sequence, read N- to C-terminus: Cytosolic Fe-S cluster assembly factor CFD1 (281 aa).

Glycine 24–serine 31 contributes to the ATP binding site. [4Fe-4S] cluster-binding residues include cysteine 201 and cysteine 204.

The protein belongs to the Mrp/NBP35 ATP-binding proteins family. NUBP2/CFD1 subfamily. Heterotetramer of 2 NBP35 and 2 CFD1 chains. [4Fe-4S] cluster serves as cofactor.

The protein resides in the cytoplasm. In terms of biological role, component of the cytosolic iron-sulfur (Fe/S) protein assembly (CIA) machinery. Required for maturation of extramitochondrial Fe-S proteins. The NBP35-CFD1 heterotetramer forms a Fe-S scaffold complex, mediating the de novo assembly of an Fe-S cluster and its transfer to target apoproteins. Required for biogenesis and export of both ribosomal subunits, which may reflect a role in assembly of the Fe/S clusters in RLI1, a protein which performs rRNA processing and ribosome export. In Eremothecium gossypii (strain ATCC 10895 / CBS 109.51 / FGSC 9923 / NRRL Y-1056) (Yeast), this protein is Cytosolic Fe-S cluster assembly factor CFD1.